Reading from the N-terminus, the 478-residue chain is Chromosomal replication initiator protein DnaA (478 aa).

The segment at 1–71 is domain I, interacts with DnaA modulators; sequence MKEFWQTCVS…EALAAEWFQR (71 aa). Residues 71-140 are domain II; it reads RPVQVAFELP…DAAGVVYERS (70 aa). The tract at residues 141–357 is domain III, AAA+ region; the sequence is RLNTDLTFDN…GALRKVLAYA (217 aa). Residues G185, G187, K188, and T189 each contribute to the ATP site. Positions 358 to 478 are domain IV, binds dsDNA; that stretch reads RFHGRDVLSV…LHVLEQTLKG (121 aa).

This sequence belongs to the DnaA family. In terms of assembly, oligomerizes as a right-handed, spiral filament on DNA at oriC.

Its subcellular location is the cytoplasm. Its function is as follows. Plays an essential role in the initiation and regulation of chromosomal replication. ATP-DnaA binds to the origin of replication (oriC) to initiate formation of the DNA replication initiation complex once per cell cycle. Binds the DnaA box (a 9 base pair repeat at the origin) and separates the double-stranded (ds)DNA. Forms a right-handed helical filament on oriC DNA; dsDNA binds to the exterior of the filament while single-stranded (ss)DNA is stabiized in the filament's interior. The ATP-DnaA-oriC complex binds and stabilizes one strand of the AT-rich DNA unwinding element (DUE), permitting loading of DNA polymerase. After initiation quickly degrades to an ADP-DnaA complex that is not apt for DNA replication. Binds acidic phospholipids. In Bordetella petrii (strain ATCC BAA-461 / DSM 12804 / CCUG 43448), this protein is Chromosomal replication initiator protein DnaA.